The sequence spans 265 residues: NAD kinase (265 aa).

Residue Asp-45 is the Proton acceptor of the active site. NAD(+) contacts are provided by residues Asp-45–Gly-46, Asn-121–Glu-122, Arg-147, Asp-149, Ala-184, and Gln-221.

The protein belongs to the NAD kinase family. A divalent metal cation serves as cofactor.

It localises to the cytoplasm. It catalyses the reaction NAD(+) + ATP = ADP + NADP(+) + H(+). Its function is as follows. Involved in the regulation of the intracellular balance of NAD and NADP, and is a key enzyme in the biosynthesis of NADP. Catalyzes specifically the phosphorylation on 2'-hydroxyl of the adenosine moiety of NAD to yield NADP. This Leuconostoc citreum (strain KM20) protein is NAD kinase.